We begin with the raw amino-acid sequence, 316 residues long: 4-hydroxy-3-methylbut-2-enyl diphosphate reductase (316 aa).

Cys17 is a [4Fe-4S] cluster binding site. Residues His46 and His79 each contribute to the (2E)-4-hydroxy-3-methylbut-2-enyl diphosphate site. Dimethylallyl diphosphate is bound by residues His46 and His79. Positions 46 and 79 each coordinate isopentenyl diphosphate. Cys101 is a [4Fe-4S] cluster binding site. His129 contributes to the (2E)-4-hydroxy-3-methylbut-2-enyl diphosphate binding site. His129 is a dimethylallyl diphosphate binding site. His129 contacts isopentenyl diphosphate. Glu131 functions as the Proton donor in the catalytic mechanism. Thr170 lines the (2E)-4-hydroxy-3-methylbut-2-enyl diphosphate pocket. Cys200 serves as a coordination point for [4Fe-4S] cluster. (2E)-4-hydroxy-3-methylbut-2-enyl diphosphate is bound by residues Ser228, Ser229, Asn230, and Ser273. Dimethylallyl diphosphate is bound by residues Ser228, Ser229, Asn230, and Ser273. Positions 228, 229, 230, and 273 each coordinate isopentenyl diphosphate.

This sequence belongs to the IspH family. Requires [4Fe-4S] cluster as cofactor.

It carries out the reaction isopentenyl diphosphate + 2 oxidized [2Fe-2S]-[ferredoxin] + H2O = (2E)-4-hydroxy-3-methylbut-2-enyl diphosphate + 2 reduced [2Fe-2S]-[ferredoxin] + 2 H(+). It catalyses the reaction dimethylallyl diphosphate + 2 oxidized [2Fe-2S]-[ferredoxin] + H2O = (2E)-4-hydroxy-3-methylbut-2-enyl diphosphate + 2 reduced [2Fe-2S]-[ferredoxin] + 2 H(+). The protein operates within isoprenoid biosynthesis; dimethylallyl diphosphate biosynthesis; dimethylallyl diphosphate from (2E)-4-hydroxy-3-methylbutenyl diphosphate: step 1/1. It functions in the pathway isoprenoid biosynthesis; isopentenyl diphosphate biosynthesis via DXP pathway; isopentenyl diphosphate from 1-deoxy-D-xylulose 5-phosphate: step 6/6. Catalyzes the conversion of 1-hydroxy-2-methyl-2-(E)-butenyl 4-diphosphate (HMBPP) into a mixture of isopentenyl diphosphate (IPP) and dimethylallyl diphosphate (DMAPP). Acts in the terminal step of the DOXP/MEP pathway for isoprenoid precursor biosynthesis. In Roseobacter denitrificans (strain ATCC 33942 / OCh 114) (Erythrobacter sp. (strain OCh 114)), this protein is 4-hydroxy-3-methylbut-2-enyl diphosphate reductase.